The chain runs to 476 residues: Inosine-5'-monophosphate dehydrogenase (476 aa).

CBS domains follow at residues 92 to 150 and 151 to 207; these read MIEN…IADV and MTKD…PNAS. NAD(+)-binding positions include D244 and 294–296; that span reads GVG. Residues G296 and G298 each contribute to the K(+) site. S299 lines the IMP pocket. C301 serves as a coordination point for K(+). The active-site Thioimidate intermediate is the C301. Residues 334–336, 357–358, 381–385, and E413 contribute to the IMP site; these read DGG, GS, and YRGMA. K(+) is bound by residues E467 and S468.

This sequence belongs to the IMPDH/GMPR family. Homotetramer. It depends on K(+) as a cofactor.

The catalysed reaction is IMP + NAD(+) + H2O = XMP + NADH + H(+). It functions in the pathway purine metabolism; XMP biosynthesis via de novo pathway; XMP from IMP: step 1/1. With respect to regulation, mycophenolic acid (MPA) is a non-competitive inhibitor that prevents formation of the closed enzyme conformation by binding to the same site as the amobile flap. In contrast, mizoribine monophosphate (MZP) is a competitive inhibitor that induces the closed conformation. MPA is a potent inhibitor of mammalian IMPDHs but a poor inhibitor of the bacterial enzymes. MZP is a more potent inhibitor of bacterial IMPDH. Functionally, catalyzes the conversion of inosine 5'-phosphate (IMP) to xanthosine 5'-phosphate (XMP), the first committed and rate-limiting step in the de novo synthesis of guanine nucleotides, and therefore plays an important role in the regulation of cell growth. This is Inosine-5'-monophosphate dehydrogenase from Nitrosopumilus maritimus (strain SCM1).